We begin with the raw amino-acid sequence, 399 residues long: Phosphoglycerate kinase (399 aa).

Substrate is bound by residues 22–24 (DLN), arginine 37, 60–63 (HFGR), arginine 119, and arginine 152. Residues lysine 202, glutamate 324, and 354–357 (GGDT) each bind ATP.

This sequence belongs to the phosphoglycerate kinase family. As to quaternary structure, monomer.

It is found in the cytoplasm. The enzyme catalyses (2R)-3-phosphoglycerate + ATP = (2R)-3-phospho-glyceroyl phosphate + ADP. The protein operates within carbohydrate degradation; glycolysis; pyruvate from D-glyceraldehyde 3-phosphate: step 2/5. The chain is Phosphoglycerate kinase from Sinorhizobium fredii (strain NBRC 101917 / NGR234).